The following is a 99-amino-acid chain: Aspartyl/glutamyl-tRNA(Asn/Gln) amidotransferase subunit C (99 aa).

Belongs to the GatC family. As to quaternary structure, heterotrimer of A, B and C subunits.

It carries out the reaction L-glutamyl-tRNA(Gln) + L-glutamine + ATP + H2O = L-glutaminyl-tRNA(Gln) + L-glutamate + ADP + phosphate + H(+). The enzyme catalyses L-aspartyl-tRNA(Asn) + L-glutamine + ATP + H2O = L-asparaginyl-tRNA(Asn) + L-glutamate + ADP + phosphate + 2 H(+). In terms of biological role, allows the formation of correctly charged Asn-tRNA(Asn) or Gln-tRNA(Gln) through the transamidation of misacylated Asp-tRNA(Asn) or Glu-tRNA(Gln) in organisms which lack either or both of asparaginyl-tRNA or glutaminyl-tRNA synthetases. The reaction takes place in the presence of glutamine and ATP through an activated phospho-Asp-tRNA(Asn) or phospho-Glu-tRNA(Gln). The chain is Aspartyl/glutamyl-tRNA(Asn/Gln) amidotransferase subunit C from Rhodococcus opacus (strain B4).